The primary structure comprises 239 residues: 1-(5-phosphoribosyl)-5-[(5-phosphoribosylamino)methylideneamino] imidazole-4-carboxamide isomerase (239 aa).

Residue D9 is the Proton acceptor of the active site. Catalysis depends on D131, which acts as the Proton donor.

Belongs to the HisA/HisF family.

The protein resides in the cytoplasm. The enzyme catalyses 1-(5-phospho-beta-D-ribosyl)-5-[(5-phospho-beta-D-ribosylamino)methylideneamino]imidazole-4-carboxamide = 5-[(5-phospho-1-deoxy-D-ribulos-1-ylimino)methylamino]-1-(5-phospho-beta-D-ribosyl)imidazole-4-carboxamide. It participates in amino-acid biosynthesis; L-histidine biosynthesis; L-histidine from 5-phospho-alpha-D-ribose 1-diphosphate: step 4/9. The polypeptide is 1-(5-phosphoribosyl)-5-[(5-phosphoribosylamino)methylideneamino] imidazole-4-carboxamide isomerase (Bacteroides fragilis (strain YCH46)).